We begin with the raw amino-acid sequence, 596 residues long: Deuterosome assembly protein 1 (596 aa).

Coiled-coil stretches lie at residues 8–68 (IARN…NHEI), 130–180 (CELQ…FQKE), and 227–284 (IENL…DLLR). Over residues 297-306 (TANLANQKTA) the composition is skewed to polar residues. The disordered stretch occupies residues 297–316 (TANLANQKTAQGEEASFQVT). Residues 337–402 (SEKYQAENDL…LKGAQNRQTS (66 aa)) are a coiled coil. A disordered region spans residues 447–467 (DKPQKHRSFHGENNSLKPTNY). Residues 457–467 (GENNSLKPTNY) are compositionally biased toward polar residues.

This sequence belongs to the CEP63 family.

The protein resides in the cytoplasm. Key structural component of the deuterosome, a structure that promotes de novo centriole amplification in multiciliated cells. Deuterosome-mediated centriole amplification occurs in terminally differentiated multiciliated cells and can generate more than 100 centrioles. Probably sufficient for the specification and formation of the deuterosome inner core. This Xenopus tropicalis (Western clawed frog) protein is Deuterosome assembly protein 1.